Reading from the N-terminus, the 232-residue chain is Protein INAPERTURATE POLLEN 1 homolog (232 aa).

As to quaternary structure, interacts with LECRKS7/DAF1.

It is found in the cytoplasm. Its function is as follows. Required for pollen aperture formation, male fertility and LECRKS7/DAF1 function. Seems to be involved in operculum protrusion. Participates in the modification of plasma membrane at future aperture sites, possibly by creating close contact between the plasma membrane and callose wall to prevent primexine formation and sporopollenin deposition. The protein is Protein INAPERTURATE POLLEN 1 homolog of Oryza sativa subsp. japonica (Rice).